The primary structure comprises 197 residues: Putative double homeobox protein 3 (197 aa).

DNA-binding regions (homeobox) lie at residues 46–105 (GRRM…LRQH) and 121–180 (GRRK…WGQS). The interval 102-127 (LRQHRRQSRPWPGRRDPQKGRRKRTA) is disordered.

The protein belongs to the paired homeobox family. As to expression, expressed in hepatoma Hep3B cells.

The protein localises to the nucleus. The sequence is that of Putative double homeobox protein 3 (DUX3) from Homo sapiens (Human).